We begin with the raw amino-acid sequence, 304 residues long: Aspartate carbamoyltransferase catalytic subunit (304 aa).

R54 and T55 together coordinate carbamoyl phosphate. K83 contributes to the L-aspartate binding site. The carbamoyl phosphate site is built by R104, H132, and Q135. L-aspartate-binding residues include R165 and R226. Carbamoyl phosphate-binding residues include L265 and P266.

This sequence belongs to the aspartate/ornithine carbamoyltransferase superfamily. ATCase family. As to quaternary structure, heterooligomer of catalytic and regulatory chains.

The enzyme catalyses carbamoyl phosphate + L-aspartate = N-carbamoyl-L-aspartate + phosphate + H(+). It functions in the pathway pyrimidine metabolism; UMP biosynthesis via de novo pathway; (S)-dihydroorotate from bicarbonate: step 2/3. Functionally, catalyzes the condensation of carbamoyl phosphate and aspartate to form carbamoyl aspartate and inorganic phosphate, the committed step in the de novo pyrimidine nucleotide biosynthesis pathway. In Pyrobaculum islandicum (strain DSM 4184 / JCM 9189 / GEO3), this protein is Aspartate carbamoyltransferase catalytic subunit.